The chain runs to 322 residues: uncharacterized protein (322 aa).

Composition is skewed to basic residues over residues M1–T16 and L43–V61. Residues M1–T69 are disordered. Residues G261, I281, and L290 each coordinate S-adenosyl-L-methionine.

The protein belongs to the class IV-like SAM-binding methyltransferase superfamily. RNA methyltransferase TrmH family.

This is an uncharacterized protein from Mycobacterium bovis (strain ATCC BAA-935 / AF2122/97).